Here is a 366-residue protein sequence, read N- to C-terminus: Probable protein arginine N-methyltransferase 1.2 (366 aa).

An SAM-dependent MTase PRMT-type domain is found at 45–347 (ADYYFDSYSH…NPRDVDIKLS (303 aa)). Residues E157 and E166 contribute to the active site.

This sequence belongs to the class I-like SAM-binding methyltransferase superfamily. Protein arginine N-methyltransferase family. In terms of assembly, interacts with FIB2 and PRMT11.

It is found in the nucleus. Its subcellular location is the cytoplasm. Methylates (mono and asymmetric dimethylation) the guanidino nitrogens of arginyl residues present in a glycine and arginine-rich domain. Type I arginine methyltransferase active on both histones and non-histone proteins. Mediates the methylation of MED36A. The protein is Probable protein arginine N-methyltransferase 1.2 (PRMT12) of Arabidopsis thaliana (Mouse-ear cress).